A 209-amino-acid chain; its full sequence is Glycolipid transfer protein (209 aa).

Ala2 carries the N-acetylalanine modification. 2 consecutive repeat copies span residues 45-55 (IKADISGNITK) and 56-66 (IKAVYDTNPAK). Residues 45–66 (IKADISGNITKIKAVYDTNPAK) form a 2 X 12 AA approximate tandem repeats region. Residue 48–55 (DISGNITK) coordinates beta-D-galactosyl-(1-&gt;4)-beta-D-glucosyl-(1&lt;-&gt;1)-N-[(9Z)-octadecenoyl]-sphing-4-enine. 2 residues coordinate beta-D-galactosyl-(1-&gt;4)-beta-D-glucosyl-(1&lt;-&gt;1)-N-[(9Z)-octadecenoyl]-sphing-4-enine: His140 and Tyr207.

This sequence belongs to the GLTP family. In terms of assembly, monomer. In terms of tissue distribution, detected in fibroblasts (at protein level). Detected in fibroblasts and in various cancer cell lines.

It localises to the cytoplasm. Accelerates the intermembrane transfer of various glycolipids. Catalyzes the transfer of various glycosphingolipids between membranes but does not catalyze the transfer of phospholipids. May be involved in the intracellular translocation of glucosylceramides. In Homo sapiens (Human), this protein is Glycolipid transfer protein (GLTP).